The sequence spans 244 residues: GTP cyclohydrolase 1 type 2 homolog (244 aa).

Residues His-65, His-66, Asp-102, His-216, and Glu-220 each coordinate a divalent metal cation.

The protein belongs to the GTP cyclohydrolase I type 2/NIF3 family. As to quaternary structure, homohexamer; trimer of dimers, that forms a hollow cage-like architecture.

Its function is as follows. DNA-binding protein exhibiting the ability to bind to both single-stranded and double-stranded DNA. This is GTP cyclohydrolase 1 type 2 homolog from Methanocaldococcus jannaschii (strain ATCC 43067 / DSM 2661 / JAL-1 / JCM 10045 / NBRC 100440) (Methanococcus jannaschii).